The primary structure comprises 326 residues: Ficolin-1 (326 aa).

Residues 1–29 (MELSGATMARGLAVLLVLFLHIKNLPAQA) form the signal peptide. In terms of domain architecture, Collagen-like spans 55-93 (GLPGAPGPKGEAGVIGERGERGLPGAPGKAGPVGPKGDR). Residues 72-111 (RGERGLPGAPGKAGPVGPKGDRGEKGMRGEKGDAGQSQSC) are disordered. The span at 77–89 (LPGAPGKAGPVGP) shows a compositional bias: low complexity. Positions 90 to 104 (KGDRGEKGMRGEKGD) are enriched in basic and acidic residues. Positions 109–326 (QSCATGPRNC…KVSEMKVRPA (218 aa)) constitute a Fibrinogen C-terminal domain. 2 disulfides stabilise this stretch: cysteine 111–cysteine 139 and cysteine 118–cysteine 146. Residues 115 to 154 (PRNCKDLLDRGYFLSGWHTIYLPDCRPLTVLCDMDTDGGG) are a domain; contributes to trimerization. The segment at 155–243 (WTVFQRRMDG…LVLGAFVGGS (89 aa)) is b domain; contributes to trimerization. Ca(2+) is bound by residues aspartate 262, aspartate 264, serine 266, and serine 268. Cysteine 270 and cysteine 283 are disulfide-bonded. Position 282–284 (282–284 (DCH)) interacts with a carbohydrate. A glycan (N-linked (GlcNAc...) asparagine) is linked at asparagine 305. A p domain region spans residues 317–326 (KVSEMKVRPA).

The protein belongs to the ficolin lectin family. In terms of assembly, homotrimer. Interacts with elastin/ELN. Interacts (via Fibrinogen C-terminal domain) with FFAR2. Interacts with CRP; may regulate monocyte activation by FCN1. In terms of tissue distribution, peripheral blood leukocytes, monocytes and granulocytes. Also detected in spleen, lung, and thymus, may be due to the presence of tissue macrophages or trapped blood in these tissues. Not detected on lymphocytes.

The protein resides in the secreted. It is found in the cell membrane. In terms of biological role, extracellular lectin functioning as a pattern-recognition receptor in innate immunity. Binds the sugar moieties of pathogen-associated molecular patterns (PAMPs) displayed on microbes and activates the lectin pathway of the complement system. May also activate monocytes through a G protein-coupled receptor, FFAR2, inducing the secretion of interleukin-8/IL-8. Binds preferentially to 9-O-acetylated 2-6-linked sialic acid derivatives and to various glycans containing sialic acid engaged in a 2-3 linkage. This Homo sapiens (Human) protein is Ficolin-1 (FCN1).